A 544-amino-acid chain; its full sequence is Zinc finger protein 502 (544 aa).

Lys43 is covalently cross-linked (Glycyl lysine isopeptide (Lys-Gly) (interchain with G-Cter in SUMO2)). 14 consecutive C2H2-type zinc fingers follow at residues 155 to 177 (WKCN…QRTH), 183 to 205 (YTCE…QRIH), 211 to 233 (YGCE…QRIH), 239 to 261 (YKCN…QRIH), 267 to 289 (YKCN…QRIH), 295 to 317 (YICS…QRIH), 323 to 345 (HKCD…QRIH), 351 to 373 (YKCK…QRIH), 379 to 401 (YKCK…QRIH), 407 to 429 (YKCS…QRSH), 435 to 457 (YKCN…MRIH), 463 to 485 (YKCK…HRTH), 491 to 513 (YKCS…YRIH), and 519 to 541 (YECI…QKLH).

It belongs to the krueppel C2H2-type zinc-finger protein family. In terms of assembly, (Microbial infection) Interacts with human respiratory syncytial virus (HRSV) matrix protein; this interaction probably facilitates viral release.

The protein resides in the nucleus. Its function is as follows. May be involved in transcriptional regulation. The chain is Zinc finger protein 502 (ZNF502) from Homo sapiens (Human).